The sequence spans 184 residues: Ribosome-recycling factor (184 aa).

Belongs to the RRF family.

The protein localises to the cytoplasm. In terms of biological role, responsible for the release of ribosomes from messenger RNA at the termination of protein biosynthesis. May increase the efficiency of translation by recycling ribosomes from one round of translation to another. This is Ribosome-recycling factor from Natranaerobius thermophilus (strain ATCC BAA-1301 / DSM 18059 / JW/NM-WN-LF).